The primary structure comprises 324 residues: Geranylgeranyl pyrophosphate synthase dpmpD (324 aa).

Isopentenyl diphosphate-binding residues include Lys-50, Arg-53, and His-82. Mg(2+) is bound by residues Asp-89 and Asp-93. Arg-98 contacts dimethylallyl diphosphate. An isopentenyl diphosphate-binding site is contributed by Arg-99. Positions 176, 177, and 210 each coordinate dimethylallyl diphosphate. A Mg(2+)-binding site is contributed by Asp-213. Asn-217, Lys-227, and Lys-237 together coordinate dimethylallyl diphosphate.

Belongs to the FPP/GGPP synthase family. Requires Mg(2+) as cofactor.

It carries out the reaction isopentenyl diphosphate + dimethylallyl diphosphate = (2E)-geranyl diphosphate + diphosphate. The catalysed reaction is isopentenyl diphosphate + (2E)-geranyl diphosphate = (2E,6E)-farnesyl diphosphate + diphosphate. It catalyses the reaction isopentenyl diphosphate + (2E,6E)-farnesyl diphosphate = (2E,6E,10E)-geranylgeranyl diphosphate + diphosphate. It participates in secondary metabolite biosynthesis; terpenoid biosynthesis. Geranylgeranyl pyrophosphate synthase; part of the gene cluster that mediates the biosynthesis of diterpenoid pyrones. The first step of the pathway is the synthesis of the alpha-pyrone moiety by the polyketide synthase dpmpA via condensation of one acetyl-CoA starter unit with 3 malonyl-CoA units and 2 methylations. The alpha-pyrone is then combined with geranylgeranyl pyrophosphate (GGPP) formed by the GGPP synthase dpmpD through the action of the prenyltransferase dpmpC to yield a linear alpha-pyrone diterpenoid. Subsequent steps in the diterpenoid pyrone biosynthetic pathway involve the decalin core formation, which is initiated by the epoxidation of the C10-C11 olefin by the FAD-dependent oxidoreductase dpmpE, and is followed by a cyclization cascade catalyzed by the terpene cyclase dpmpB. The short chain dehydrogenase/reductase dpmpG then oxidizes the 8S hydroxy group to a ketone and the short chain dehydrogenase/reductase dpmpH reduces the ketone to the 8R hydroxy group to yield higginsianin B. Higginsianin B is further methylated by the methyltransferase dpmpI to produce the intermediate named FDDP B. The cytochrome P450 monooxygenase dpmpJ then oxidizes the C-26 methyl to primary alcohol, producing the final diterpenoid pyrone with a C-26 primary alcohol on the gamma-pyrone moiety named FDDP C. The chain is Geranylgeranyl pyrophosphate synthase dpmpD from Macrophomina phaseolina (strain MS6) (Charcoal rot fungus).